Reading from the N-terminus, the 165-residue chain is Shikimate kinase (165 aa).

Position 11-16 (11-16) interacts with ATP; sequence GAGKTT. Residue Thr15 coordinates Mg(2+). Residues Asp33, Arg57, and Gly78 each coordinate substrate. ATP is bound at residue Arg116. Substrate is bound at residue Arg134.

This sequence belongs to the shikimate kinase family. In terms of assembly, monomer. Requires Mg(2+) as cofactor.

The protein localises to the cytoplasm. It catalyses the reaction shikimate + ATP = 3-phosphoshikimate + ADP + H(+). Its pathway is metabolic intermediate biosynthesis; chorismate biosynthesis; chorismate from D-erythrose 4-phosphate and phosphoenolpyruvate: step 5/7. In terms of biological role, catalyzes the specific phosphorylation of the 3-hydroxyl group of shikimic acid using ATP as a cosubstrate. The protein is Shikimate kinase of Bacillus mycoides (strain KBAB4) (Bacillus weihenstephanensis).